We begin with the raw amino-acid sequence, 520 residues long: Sodium-dependent dicarboxylate transporter SdcS (520 aa).

Transmembrane regions (helical) follow at residues 30–50, 55–75, 77–97, 104–124, 160–180, 207–227, 242–262, 298–318, 323–343, 362–382, 399–419, 428–448, 452–472, and 491–511; these read AGQLIGLILGPLLFLLTLLFF, LPWKGVYVLAITLWIATWWIT, AIPIAATSLLPIVLLPLGHIL, SEYGNDIIFLFLGGFILAIAM, SMFVSNTAAVMIMIPIGLAII, IGYAGTIGGLGTLIGTPPLII, FAKWMIVGIPTVIVLLGITWL, KVVQTIFVLASLLWITREFLL, VTSSVADGTIAIFISILLFII, ELPWGVLILFGGGLALAKGIS, GVSPILIVIVITIFVLFLTEV, MILPILATLSVAVGVHPLLLM, AMAANCAYMLPVGTPPNAIIF, and LISAIIIILVVYYVMPIVLGI.

The protein belongs to the SLC13A/DASS transporter (TC 2.A.47) family. NADC subfamily.

The protein resides in the cell membrane. Its function is as follows. Mediates the transport of the dicarboxylates fumarate, malate, and succinate across the cytoplasmic membrane via a Na(+)-electrochemical gradient. The protein is Sodium-dependent dicarboxylate transporter SdcS (sdcS) of Staphylococcus aureus (strain USA300).